A 312-amino-acid chain; its full sequence is Malate dehydrogenase (312 aa).

NAD(+) is bound by residues Gly7–Gly13 and Asp34. Residues Arg81 and Arg87 each contribute to the substrate site. Residues Asn94 and Ile117–Asn119 each bind NAD(+). Asn119 and Arg153 together coordinate substrate. Catalysis depends on His177, which acts as the Proton acceptor. Residue Met227 participates in NAD(+) binding.

Belongs to the LDH/MDH superfamily. MDH type 1 family. As to quaternary structure, homodimer.

The catalysed reaction is (S)-malate + NAD(+) = oxaloacetate + NADH + H(+). In terms of biological role, catalyzes the reversible oxidation of malate to oxaloacetate. In Enterobacter sp. (strain 638), this protein is Malate dehydrogenase.